Here is a 171-residue protein sequence, read N- to C-terminus: Peptide deformylase (171 aa).

2 residues coordinate Fe cation: C94 and H136. The active site involves E137. Residue H140 coordinates Fe cation.

The protein belongs to the polypeptide deformylase family. Requires Fe(2+) as cofactor.

It carries out the reaction N-terminal N-formyl-L-methionyl-[peptide] + H2O = N-terminal L-methionyl-[peptide] + formate. Removes the formyl group from the N-terminal Met of newly synthesized proteins. Requires at least a dipeptide for an efficient rate of reaction. N-terminal L-methionine is a prerequisite for activity but the enzyme has broad specificity at other positions. In Afipia carboxidovorans (strain ATCC 49405 / DSM 1227 / KCTC 32145 / OM5) (Oligotropha carboxidovorans), this protein is Peptide deformylase.